The primary structure comprises 446 residues: Tubulin beta-6 chain (446 aa).

The MREI motif motif lies at 1–4; the sequence is MREI. The GTP site is built by Gln-11, Glu-69, Ser-138, Gly-142, Thr-143, and Gly-144. Glu-69 contributes to the Mg(2+) binding site. Ser-172 carries the phosphoserine; by CDK1 modification. The GTP site is built by Asn-204 and Asn-226. At Glu-438 the chain carries 5-glutamyl polyglutamate.

The protein belongs to the tubulin family. Dimer of alpha and beta chains. A typical microtubule is a hollow water-filled tube with an outer diameter of 25 nm and an inner diameter of 15 nM. Alpha-beta heterodimers associate head-to-tail to form protofilaments running lengthwise along the microtubule wall with the beta-tubulin subunit facing the microtubule plus end conferring a structural polarity. Microtubules usually have 13 protofilaments but different protofilament numbers can be found in some organisms and specialized cells. The cofactor is Mg(2+). In terms of processing, some glutamate residues at the C-terminus are polyglycylated, resulting in polyglycine chains on the gamma-carboxyl group. Glycylation is mainly limited to tubulin incorporated into axonemes (cilia and flagella) whereas glutamylation is prevalent in neuronal cells, centrioles, axonemes, and the mitotic spindle. Both modifications can coexist on the same protein on adjacent residues, and lowering polyglycylation levels increases polyglutamylation, and reciprocally. Cilia and flagella glycylation is required for their stability and maintenance. Flagella glycylation controls sperm motility. Post-translationally, some glutamate residues at the C-terminus are polyglutamylated, resulting in polyglutamate chains on the gamma-carboxyl group. Polyglutamylation plays a key role in microtubule severing by spastin (SPAST). SPAST preferentially recognizes and acts on microtubules decorated with short polyglutamate tails: severing activity by SPAST increases as the number of glutamates per tubulin rises from one to eight, but decreases beyond this glutamylation threshold. Glutamylation is also involved in cilia motility. Phosphorylated on Ser-172 by CDK1 during the cell cycle, from metaphase to telophase, but not in interphase. This phosphorylation inhibits tubulin incorporation into microtubules.

The protein localises to the cytoplasm. It is found in the cytoskeleton. In terms of biological role, tubulin is the major constituent of microtubules, a cylinder consisting of laterally associated linear protofilaments composed of alpha- and beta-tubulin heterodimers. Microtubules grow by the addition of GTP-tubulin dimers to the microtubule end, where a stabilizing cap forms. Below the cap, tubulin dimers are in GDP-bound state, owing to GTPase activity of alpha-tubulin. The protein is Tubulin beta-6 chain (TUBB6) of Bos taurus (Bovine).